The primary structure comprises 462 residues: Proline--tRNA ligase (462 aa).

Belongs to the class-II aminoacyl-tRNA synthetase family. ProS type 3 subfamily. Homodimer.

The protein localises to the cytoplasm. The catalysed reaction is tRNA(Pro) + L-proline + ATP = L-prolyl-tRNA(Pro) + AMP + diphosphate. Catalyzes the attachment of proline to tRNA(Pro) in a two-step reaction: proline is first activated by ATP to form Pro-AMP and then transferred to the acceptor end of tRNA(Pro). The protein is Proline--tRNA ligase of Thermoplasma acidophilum (strain ATCC 25905 / DSM 1728 / JCM 9062 / NBRC 15155 / AMRC-C165).